The sequence spans 175 residues: Protein ppBat (175 aa).

Zn(2+) is bound by residues Cys74 and Cys111. Positions 161 and 164 each coordinate riboflavin.

Homodimer.

Binds flavin derivatives, such as lumichrome, riboflavin, FMN, and FAD. May act as a flavin storage protein. Appears to lack proteolytic or chaperone activities. The polypeptide is Protein ppBat (Bacteroides thetaiotaomicron (strain ATCC 29148 / DSM 2079 / JCM 5827 / CCUG 10774 / NCTC 10582 / VPI-5482 / E50)).